The following is a 506-amino-acid chain: Maturase K (506 aa).

Belongs to the intron maturase 2 family. MatK subfamily.

The protein resides in the plastid. It is found in the chloroplast. Its function is as follows. Usually encoded in the trnK tRNA gene intron. Probably assists in splicing its own and other chloroplast group II introns. In Phyllodoce empetriformis (Pink mountainheath), this protein is Maturase K.